The sequence spans 425 residues: Glutamate-1-semialdehyde 2,1-aminomutase (425 aa).

N6-(pyridoxal phosphate)lysine is present on Lys-265.

Belongs to the class-III pyridoxal-phosphate-dependent aminotransferase family. HemL subfamily. As to quaternary structure, homodimer. It depends on pyridoxal 5'-phosphate as a cofactor.

Its subcellular location is the cytoplasm. It carries out the reaction (S)-4-amino-5-oxopentanoate = 5-aminolevulinate. The protein operates within porphyrin-containing compound metabolism; protoporphyrin-IX biosynthesis; 5-aminolevulinate from L-glutamyl-tRNA(Glu): step 2/2. The polypeptide is Glutamate-1-semialdehyde 2,1-aminomutase (Thiobacillus denitrificans (strain ATCC 25259 / T1)).